Consider the following 265-residue polypeptide: Probable DNA replication complex GINS protein PSF3 (265 aa).

Residues 180-265 are disordered; the sequence is ISTSSNNKNN…KKRKRMFDDE (86 aa). Over residues 183 to 246 the composition is skewed to low complexity; sequence SSNNKNNSSN…NNNNNSQNSS (64 aa). Over residues 255–265 the composition is skewed to basic residues; the sequence is VKKRKRMFDDE.

Belongs to the GINS3/PSF3 family. In terms of assembly, component of the GINS complex which is a heterotetramer of gins1, gins2, gins3 and gins4.

Its subcellular location is the nucleus. In terms of biological role, the GINS complex plays an essential role in the initiation of DNA replication. The sequence is that of Probable DNA replication complex GINS protein PSF3 (gins3) from Dictyostelium discoideum (Social amoeba).